A 515-amino-acid chain; its full sequence is Interferon-induced, double-stranded RNA-activated protein kinase (515 aa).

An N-acetylalanine modification is found at A2. Residues 8 to 76 (FYMDKLNKYR…AKLAVDILDN (69 aa)) form the DRBM 1 domain. K68 participates in a covalent cross-link: Glycyl lysine isopeptide (Lys-Gly) (interchain with G-Cter in ISG15). T84 bears the Phosphothreonine mark. The region spanning 95 to 162 (NYIGLVNSFA…AKEAYQKLLK (68 aa)) is the DRBM 2 domain. At Y96 the chain carries Phosphotyrosine; by autocatalysis. K154 is covalently cross-linked (Glycyl lysine isopeptide (Lys-Gly) (interchain with G-Cter in ISG15)). The residue at position 157 (Y157) is a Phosphotyrosine; by autocatalysis. The interval 204 to 224 (ENVFTNGLGENKRKSGVKVSP) is disordered. A Phosphothreonine modification is found at T233. An interaction with TRAF5 region spans residues 241–515 (DFEDIEEIGL…ISEKKKRNTC (275 aa)). A Protein kinase domain is found at 242–504 (FEDIEEIGLG…EILKTLAEWR (263 aa)). 248–256 (IGLGGFGQV) is an ATP binding site. Position 268 is a phosphotyrosine; by autocatalysis (Y268). K271 provides a ligand contact to ATP. Catalysis depends on D376, which acts as the Proton acceptor. Residues T409 and T414 each carry the phosphothreonine; by autocatalysis modification. The residue at position 419 (S419) is a Phosphoserine.

It belongs to the protein kinase superfamily. Ser/Thr protein kinase family. GCN2 subfamily. As to quaternary structure, homodimer. Interacts with DNAJC3 and STRBP. Forms a complex with FANCA, FANCC, FANCG and HSP70. Interacts with ADAR/ADAR1. The inactive form interacts with NCK1. Interacts (via the kinase catalytic domain) with STAT3 (via SH2 domain), TRAF2 (C-terminus), TRAF5 (C-terminus) and TRAF6 (C-terminus). Interacts with MAP2K6, TARBP2, NLRP1, NLRC4 and AIM2. Interacts (via DRBM 1 domain) with DUS2L (via DRBM domain). Interacts with DHX9 (via N-terminus) and this interaction is dependent upon activation of the kinase. The inactive form interacts with GSN. Interacts with IKBKB/IKKB, NPM1, NLRP3 and IRS1. Post-translationally, autophosphorylated on several Ser, Thr and Tyr residues. Autophosphorylation of Thr-414 is dependent on Thr-409 and is stimulated by dsRNA binding and dimerization. Autophosphorylation apparently leads to the activation of the kinase. Tyrosine autophosphorylation is essential for efficient dsRNA-binding, dimerization, and kinase activation. Expressed in heart, lung, brain, kidney, testes, thymus and bone marrow.

Its subcellular location is the cytoplasm. The protein resides in the nucleus. It localises to the perinuclear region. The catalysed reaction is L-seryl-[protein] + ATP = O-phospho-L-seryl-[protein] + ADP + H(+). It carries out the reaction L-threonyl-[protein] + ATP = O-phospho-L-threonyl-[protein] + ADP + H(+). It catalyses the reaction L-tyrosyl-[protein] + ATP = O-phospho-L-tyrosyl-[protein] + ADP + H(+). Initially produced in an inactive form and is activated by binding to viral dsRNA, which causes dimerization and autophosphorylation in the activation loop and stimulation of function. ISGylation can activate it in the absence of viral infection. Can also be activated by heparin, pro-inflammatory stimuli, growth factors, cytokines, oxidative stress and the cellular protein PRKRA. Activity is markedly stimulated by manganese ions. Activation is blocked by the cellular proteins TARBP2, DUS2L, NPM1, NCK1 and ADAR. Its function is as follows. IFN-induced dsRNA-dependent serine/threonine-protein kinase that phosphorylates the alpha subunit of eukaryotic translation initiation factor 2 (EIF2S1/eIF-2-alpha) and plays a key role in the innate immune response to viral infection. Inhibits viral replication via the integrated stress response (ISR): EIF2S1/eIF-2-alpha phosphorylation in response to viral infection converts EIF2S1/eIF-2-alpha in a global protein synthesis inhibitor, resulting to a shutdown of cellular and viral protein synthesis, while concomitantly initiating the preferential translation of ISR-specific mRNAs, such as the transcriptional activator ATF4. Exerts its antiviral activity on a wide range of DNA and RNA viruses including west nile virus (WNV), sindbis virus (SV), foot-and-mouth virus (FMDV), semliki Forest virus (SFV) and lymphocytic choriomeningitis virus (LCMV). Also involved in the regulation of signal transduction, apoptosis, cell proliferation and differentiation: phosphorylates other substrates including p53/TP53, PPP2R5A, DHX9, ILF3, and IRS1. In addition to serine/threonine-protein kinase activity, also has tyrosine-protein kinase activity and phosphorylates CDK1 at 'Tyr-4' upon DNA damage, facilitating its ubiquitination and proteasomal degradation. Either as an adapter protein and/or via its kinase activity, can regulate various signaling pathways (p38 MAP kinase, NF-kappa-B and insulin signaling pathways) and transcription factors (JUN, STAT1, STAT3, IRF1, ATF3) involved in the expression of genes encoding pro-inflammatory cytokines and IFNs. Activates the NF-kappa-B pathway via interaction with IKBKB and TRAF family of proteins and activates the p38 MAP kinase pathway via interaction with MAP2K6. Can act as both a positive and negative regulator of the insulin signaling pathway (ISP). Negatively regulates ISP by inducing the inhibitory phosphorylation of insulin receptor substrate 1 (IRS1) at 'Ser-312' and positively regulates ISP via phosphorylation of PPP2R5A which activates FOXO1, which in turn up-regulates the expression of insulin receptor substrate 2 (IRS2). Can regulate NLRP3 inflammasome assembly and the activation of NLRP3, NLRP1, AIM2 and NLRC4 inflammasomes. Plays a role in the regulation of the cytoskeleton by binding to gelsolin (GSN), sequestering the protein in an inactive conformation away from actin. The polypeptide is Interferon-induced, double-stranded RNA-activated protein kinase (Eif2ak2) (Mus musculus (Mouse)).